A 1770-amino-acid chain; its full sequence is Probable outer membrane protein PmpC (1770 aa).

The signal sequence occupies residues 1–20 (MKFMSATAVFAAALSSVTEA). Disordered regions lie at residues 73–109 (LPRK…ELDN), 264–311 (EDTL…GKGG), 481–505 (PAAP…TNSD), 611–818 (ESTP…STTE), and 1271–1329 (LRII…TSRT). The segment covering 85-97 (SPTTEGVSSSSSG) has biased composition (low complexity). The span at 268–285 (DSTPETEQTESNGNQDGS) shows a compositional bias: polar residues. 2 stretches are compositionally biased toward low complexity: residues 294 to 303 (SESPESTPSP) and 496 to 505 (QTETSDTNSD). Composition is skewed to polar residues over residues 631 to 675 (TEDP…TGNA) and 682 to 703 (QDST…QSNE). Composition is skewed to low complexity over residues 719 to 748 (ESVS…GDQS) and 762 to 802 (STDS…GDSA). The span at 1303–1319 (NNDASNQGESANGSSSP) shows a compositional bias: polar residues. The Autotransporter domain maps to 1477-1770 (EEVSYNNLWI…MMNCGARMTF (294 aa)).

It belongs to the PMP outer membrane protein family.

It is found in the secreted. Its subcellular location is the cell wall. The protein localises to the cell outer membrane. This chain is Probable outer membrane protein PmpC (pmpC), found in Chlamydia trachomatis serovar D (strain ATCC VR-885 / DSM 19411 / UW-3/Cx).